The chain runs to 190 residues: Protein LZIC (190 aa).

A coiled-coil region spans residues 2 to 63 (ASRGKTETSK…SEFNDSLKKI (62 aa)).

The protein belongs to the CTNNBIP1 family. In terms of assembly, does not interact with CTNNB1. In terms of tissue distribution, ubiquitously expressed, with highest levels in kidney. Up-regulated in several cases of gastric cancers.

The sequence is that of Protein LZIC (LZIC) from Homo sapiens (Human).